A 1162-amino-acid chain; its full sequence is MTCQKFYVVLLHWEFLYVITALNLAYPTSPWRFKLFCAPPSTTDDSFLSPAGVPNNTSSLKGASEALVEAKFNSTGIYVSELSKTIFHCCFGNEQGQNCSALTGNTEGKTLASVVKPLVFRQLGVNWDIECWMKGDLTLFICHMEPLLKNPFKNYDSKVHLLYDLPEVIDDLPLPPLKDSFQTVQCNCSVRECECHVPVPRAKVNYALLMYLEITSAGVSFQSPLMSLQPMLVVKPDPPLGLRMEVTDDGNLKISWDSQTKAPFPLQYQVKYLENSTIVREAAEIVSDTSLLVDSVLPGSSYEVQVRSKRLDGSGVWSDWSLPQLFTTQDVMYFPPKILTSVGSNASFCCIYKNENQTISSKQIVWWMNLAEKIPETQYNTVSDHISKVTFSNLKATRPRGKFTYDAVYCCNEQACHHRYAELYVIDVNINISCETDGYLTKMTCRWSPSTIQSLVGSTVQLRYHRRSLYCPDNPSIRPTSELKNCVLQTDGFYECVFQPIFLLSGYTMWIRINHSLGSLDSPPTCVLPDSVVKPLPPSNVKAEITINTGLLKVSWEKPVFPENNLQFQIRYGLNGKEIQWKTHEVFDAKSKSASLPVSDLCAVYVVQVRCRRLDGLGYWSNWSSPAYTLVMDVKVPMRGPEFWRIMDGDITKKERNVTLLWKPLMKNDSLCSVRRYVVKHRTAHNGTWSQDVGNQTNLTFLWAESAHTVTVLAINSIGASLVNFNLTFSWPMSKVNAVQSLSAYPLSSSCVILSWTLSPNDYSLLYLVIEWKNLNDDDGMKWLRIPSNVNKYYIHDNFIPIEKYQFSLYPVFMEGVGKPKIINGFTKDDIAKQQNDAGLYVIVPIIISSCVLLLGTLLISHQRMKKLFWDDVPNPKNCSWAQGLNFQKPETFEHLFTKHAESVIFGPLLLEPEPVSEEISVDTAWKNKDEMVPAAMVSLLLTTPDSTRGSICISDQCNSANFSGAQSTQGTCEDECQSQPSVKYATLVSNVKTVETDEEQGAIHSSVSQCIARKHSPLRQSFSSNSWEIEAQAFFLLSDHPPNVISPQLSFSGLDELLELEGNFPEENHGEKSVYYLGVSSGNKRENDMLLTDEAGVLCPFPAHCLFSDIRILQESCSHFVENNLNLGTSGKNFVPYMPQFQSCSTHSHKIIENKMCDLTV.

A signal peptide spans 1-21 (MTCQKFYVVLLHWEFLYVITA). Residues 22–839 (LNLAYPTSPW…DIAKQQNDAG (818 aa)) are Extracellular-facing. Intrachain disulfides connect C37–C90, C89–C99, C131–C142, C186–C195, and C188–C193. Residues N55, N56, N73, and N98 are each glycosylated (N-linked (GlcNAc...) asparagine). N-linked (GlcNAc...) asparagine glycosylation is present at N187. The 94-residue stretch at 238-331 (PPLGLRMEVT…LPQLFTTQDV (94 aa)) folds into the Fibronectin type-III 1 domain. N-linked (GlcNAc...) asparagine glycans are attached at residues N275, N345, and N356. Intrachain disulfides connect C350–C410 and C411–C416. N431 carries an N-linked (GlcNAc...) asparagine glycan. 3 disulfides stabilise this stretch: C434–C445, C471–C526, and C486–C496. The interval 465 to 482 (HRRSLYCPDNPSIRPTSE) is leptin-binding. 8 N-linked (GlcNAc...) asparagine glycosylation sites follow: N514, N622, N657, N668, N686, N695, N698, and N726. Fibronectin type-III domains follow at residues 537–632 (PPSN…TLVM), 637–729 (PMRG…NLTF), and 738–831 (AVQS…KDDI). Positions 620-624 (WSNWS) match the WSXWS motif motif. The chain crosses the membrane as a helical span at residues 840 to 860 (LYVIVPIIISSCVLLLGTLLI). Topologically, residues 861 to 1162 (SHQRMKKLFW…IENKMCDLTV (302 aa)) are cytoplasmic. Positions 869–877 (FWDDVPNPK) match the Box 1 motif motif. A Phosphoserine modification is found at S880. Residues 891–896 (ETFEHL) are required for JAK2 activation. The required for STAT3 phosphorylation stretch occupies residues 896–904 (LFTKHAESV). Phosphotyrosine; by JAK2 is present on Y985. Residue Y1077 is modified to Phosphotyrosine. The residue at position 1138 (Y1138) is a Phosphotyrosine; by JAK2.

It belongs to the type I cytokine receptor family. Type 2 subfamily. Present as a mixture of monomers and dimers. The phosphorylated receptor binds a number of SH2 domain-containing proteins such as JAK2, STAT3, PTPN11, and SOCS3. Interaction with SOCS3 inhibits JAK/STAT signaling and MAPK cascade. In terms of processing, on ligand binding, phosphorylated on two conserved C-terminal tyrosine residues (isoform B only) by JAK2. Tyr-985 is required for complete binding and activation of PTPN11, ERK/FOS activation,for interaction with SOCS3 and SOCS3 mediated inhibition of leptin signaling. Phosphorylation on Tyr-1138 is required for STAT3 binding/activation. Phosphorylation of Tyr-1077 has a more accessory role. Isoform B is expressed in kidney, liver, lung, ovary, spleen and uterus. Increased level in uterus during gestation. Isoform A and isoform C are predominantly expressed in cerebral microvessels and choroid plexus, with lower levels in cortex, cerebellum and hypothalamus but also liver and lung. Isoform F is expressed at high levels in brain, liver and spleen and less in stomach, kidney, thymus, heart, lung and hypothalamus.

The protein localises to the cell membrane. It localises to the basolateral cell membrane. The protein resides in the secreted. Its function is as follows. Receptor for hormone LEP/leptin. On ligand binding, mediates LEP central and peripheral effects through the activation of different signaling pathways such as JAK2/STAT3 and MAPK cascade/FOS. In the hypothalamus, LEP acts as an appetite-regulating factor that induces a decrease in food intake and an increase in energy consumption by inducing anorexinogenic factors and suppressing orexigenic neuropeptides, also regulates bone mass and secretion of hypothalamo-pituitary-adrenal hormones. In the periphery, increases basal metabolism, influences reproductive function, regulates pancreatic beta-cell function and insulin secretion, is pro-angiogenic and affects innate and adaptive immunity. Control of energy homeostasis and melanocortin production (stimulation of POMC and full repression of AgRP transcription) is mediated by STAT3 signaling, whereas distinct signals regulate NPY and the control of fertility, growth and glucose homeostasis. Involved in the regulation of counter-regulatory response to hypoglycemia by inhibiting neurons of the parabrachial nucleus. Has a specific effect on T lymphocyte responses, differentially regulating the proliferation of naive and memory T-cells. Leptin increases Th1 and suppresses Th2 cytokine production. In terms of biological role, may transport LEP across the blood-brain barrier. Binds LEP and mediates LEP endocytosis. Does not induce phosphorylation of and activate STAT3. Functionally, antagonizes Isoform A and isoform B-mediated LEP binding and endocytosis. In Rattus norvegicus (Rat), this protein is Leptin receptor (Lepr).